A 193-amino-acid chain; its full sequence is MHINEETDWIDLVKPALAKKPKKIVDNSDKFPTPRGFQQKSLVSKNIHSGNSASSTSIFAKREEELQKDLLLKKAWELAYSPLKQIPMNAILAYMSGNSLQIFSIMTTLMLLVNPLKAITSTGSAFTPFKGTHPGTLWPAMGAYILFQLLLMGIGVYKLQRMGLLPTTTSDWLAWEVSKVFMDRSYGPSKTVL.

2 consecutive transmembrane segments (helical) span residues 91–111 and 137–157; these read ILAYMSGNSLQIFSIMTTLML and LWPAMGAYILFQLLLMGIGVY.

Belongs to the EMC4 family.

It is found in the endoplasmic reticulum membrane. The chain is ER membrane protein complex subunit 4 from Schizosaccharomyces pombe (strain 972 / ATCC 24843) (Fission yeast).